A 70-amino-acid chain; its full sequence is Small ribosomal subunit protein bS21 (70 aa).

It belongs to the bacterial ribosomal protein bS21 family.

The chain is Small ribosomal subunit protein bS21 from Nitrosospira multiformis (strain ATCC 25196 / NCIMB 11849 / C 71).